Here is a 514-residue protein sequence, read N- to C-terminus: Membrane-bound lytic murein transglycosylase F (514 aa).

The first 30 residues, 1–30 (MKKLKINYLFIGILTLLLAAALWPSIPWFG), serve as a signal peptide directing secretion. The non-LT domain stretch occupies residues 31 to 269 (KTENHIAAIQ…RIEEKYLGHG (239 aa)). Residues 270–514 (DDFDYVDTRS…LFTPQKKEEK (245 aa)) are LT domain. Glutamate 314 is an active-site residue.

The protein in the N-terminal section; belongs to the bacterial solute-binding protein 3 family. In the C-terminal section; belongs to the transglycosylase Slt family.

The protein resides in the cell outer membrane. The catalysed reaction is Exolytic cleavage of the (1-&gt;4)-beta-glycosidic linkage between N-acetylmuramic acid (MurNAc) and N-acetylglucosamine (GlcNAc) residues in peptidoglycan, from either the reducing or the non-reducing ends of the peptidoglycan chains, with concomitant formation of a 1,6-anhydrobond in the MurNAc residue.. In terms of biological role, murein-degrading enzyme that degrades murein glycan strands and insoluble, high-molecular weight murein sacculi, with the concomitant formation of a 1,6-anhydromuramoyl product. Lytic transglycosylases (LTs) play an integral role in the metabolism of the peptidoglycan (PG) sacculus. Their lytic action creates space within the PG sacculus to allow for its expansion as well as for the insertion of various structures such as secretion systems and flagella. This is Membrane-bound lytic murein transglycosylase F from Salmonella paratyphi B (strain ATCC BAA-1250 / SPB7).